Consider the following 508-residue polypeptide: Matrix metalloproteinase-19 (508 aa).

Residues 1–18 form the signal peptide; the sequence is MNCQQLWLGFLLPMTVSG. A propeptide spanning residues 19 to 97 is cleaved from the precursor; it reads RVLGLAEVAP…EDPFNQKTLK (79 aa). The Cysteine switch motif lies at 83–90; sequence PRCGLEDP. Zn(2+)-binding residues include Cys85 and His212. Residue Glu213 is part of the active site. Zn(2+)-binding residues include His216 and His222. A disordered region spans residues 262–288; sequence IRDEEEEETELPTVPPVPTEPSPMPDP. Residues 274–287 show a composition bias toward pro residues; sequence TVPPVPTEPSPMPD. 4 Hemopexin repeats span residues 286–333, 334–380, 381–425, and 426–472; these read PDPC…WEGL, PGNL…EPNL, DAAL…FTGV, and PNQP…WMHC. The cysteines at positions 289 and 472 are disulfide-linked. N-linked (GlcNAc...) asparagine glycosylation is present at Asn464.

Belongs to the peptidase M10A family. The cofactor is Zn(2+). It depends on Ca(2+) as a cofactor. In terms of processing, activated by autolytic cleavage after Lys-97. Post-translationally, tyrosine phosphorylated by PKDCC/VLK. Expressed in mammary gland, placenta, lung, pancreas, ovary, small intestine, spleen, thymus, prostate, testis colon, heart and blood vessel walls. Not detected in brain and peripheral blood leukocytes. Also expressed in the synovial fluid of normal and rheumatoid patients.

It localises to the secreted. It is found in the extracellular space. The protein resides in the extracellular matrix. Its activity is regulated as follows. Strongly inhibited by TIMP-2, TIMP-3 and TIMP-4, while TIMP-1 is less efficient. In terms of biological role, endopeptidase that degrades various components of the extracellular matrix, such as aggrecan and cartilage oligomeric matrix protein (comp), during development, haemostasis and pathological conditions (arthritic disease). May also play a role in neovascularization or angiogenesis. Hydrolyzes collagen type IV, laminin, nidogen, nascin-C isoform, fibronectin, and type I gelatin. In Homo sapiens (Human), this protein is Matrix metalloproteinase-19 (MMP19).